The primary structure comprises 238 residues: MRTLFVGDLHLSTDRPDITQAFLRFLDTQLHDTDALYILGDLFEVWVGDDIAEPFAEQLAKAIYQASQKLPIFFIHGNRDFLISNAFAKRSGMTLLPEIYTVDLYGIPTVILHGDSLCTLDKPYQRFRKFRNLGWAKWLYAHLPKSKRLDIAVKLRSKSQSSNQQKSYSIMDVEPDAVLELLNATKTEQMIHGHTHRPAIHQLANGRRRIVVGDWYEQGSMLSVSQDKIELIELPFGK.

Residues Asp8, His10, Asp41, Asn78, and His113 each coordinate Mn(2+). 78–79 (NR) is a substrate binding site. Asp121, Ser159, Asn163, Lys166, and His194 together coordinate substrate. His194 and His196 together coordinate Mn(2+).

Belongs to the LpxH family. It depends on Mn(2+) as a cofactor.

It localises to the cell inner membrane. It carries out the reaction UDP-2-N,3-O-bis[(3R)-3-hydroxytetradecanoyl]-alpha-D-glucosamine + H2O = 2-N,3-O-bis[(3R)-3-hydroxytetradecanoyl]-alpha-D-glucosaminyl 1-phosphate + UMP + 2 H(+). It functions in the pathway glycolipid biosynthesis; lipid IV(A) biosynthesis; lipid IV(A) from (3R)-3-hydroxytetradecanoyl-[acyl-carrier-protein] and UDP-N-acetyl-alpha-D-glucosamine: step 4/6. Hydrolyzes the pyrophosphate bond of UDP-2,3-diacylglucosamine to yield 2,3-diacylglucosamine 1-phosphate (lipid X) and UMP by catalyzing the attack of water at the alpha-P atom. Involved in the biosynthesis of lipid A, a phosphorylated glycolipid that anchors the lipopolysaccharide to the outer membrane of the cell. The protein is UDP-2,3-diacylglucosamine hydrolase of Shewanella halifaxensis (strain HAW-EB4).